A 794-amino-acid chain; its full sequence is uncharacterized protein (794 aa).

The next 9 helical transmembrane spans lie at 34-54, 67-87, 99-119, 132-152, 257-277, 283-303, 315-335, 353-373, and 421-441; these read FSASTTTAALMSTLWIIVFAV, ITAALIHITSIPLGIGIAHLI, MLADVLLTPDFWVFGVAAFAS, LFLFTITLTLLLYTGTLADVT, VGPSVANLIPLILTVVLAMGL, LAWILAVLAQLISIAVLMFQL, WSVNAFSVIVPWLVALAVLVF, LGALMVTWLATAALWILATLF, and WTGTLFWLVVAATLYHLLMGV.

Its subcellular location is the cell membrane. This is an uncharacterized protein from Corynebacterium glutamicum (strain ATCC 13032 / DSM 20300 / JCM 1318 / BCRC 11384 / CCUG 27702 / LMG 3730 / NBRC 12168 / NCIMB 10025 / NRRL B-2784 / 534).